A 213-amino-acid chain; its full sequence is High frequency lysogenization protein HflD homolog (213 aa).

Residues 79-122 (QGLNAELTRYTLSLMVLERKLSSAKGALNTLGDRINGLQRQLDH) are a coiled coil.

It belongs to the HflD family.

It localises to the cytoplasm. The protein localises to the cell inner membrane. This Salmonella typhi protein is High frequency lysogenization protein HflD homolog.